The primary structure comprises 268 residues: MSGKHYKGPEVSCCIKYFIFGFNVIFWFLGIAFLGIGLWAWNEKGVLSNISSITDLGGFDPVWLFLVVGGVMFILGFAGCIGALRENTFLLKFFSVFLGIIFFLELTAGVLAFVFKDWIKDQLYFFINNNIRAYRDDIDLQNLIDFTQEYWQCCGAFGADDWNLNIYFNCTDSNASRERCGVPFSCCTKDPAEDVINTQCGYDARQKPEVDQQIVIYTKGCVPQFEKWLQDNLTIVAGIFIGIALLQIFGICLAQNLVSDIEAVRASW.

Topologically, residues 1-17 are cytoplasmic; that stretch reads MSGKHYKGPEVSCCIKY. The helical transmembrane segment at 18-38 threads the bilayer; the sequence is FIFGFNVIFWFLGIAFLGIGL. Over 39–61 the chain is Extracellular; sequence WAWNEKGVLSNISSITDLGGFDP. Residue asparagine 49 is glycosylated (N-linked (GlcNAc...) asparagine). The chain crosses the membrane as a helical span at residues 62-82; sequence VWLFLVVGGVMFILGFAGCIG. At 83–92 the chain is on the cytoplasmic side; sequence ALRENTFLLK. The chain crosses the membrane as a helical span at residues 93 to 113; the sequence is FFSVFLGIIFFLELTAGVLAF. Residues 114-232 lie on the Extracellular side of the membrane; sequence VFKDWIKDQL…PQFEKWLQDN (119 aa). 4 cysteine pairs are disulfide-bonded: cysteine 153–cysteine 221, cysteine 154–cysteine 186, cysteine 170–cysteine 180, and cysteine 187–cysteine 200. N-linked (GlcNAc...) asparagine glycans are attached at residues asparagine 169 and asparagine 174. Asparagine 232 is a glycosylation site (N-linked (GlcNAc...) asparagine). A helical membrane pass occupies residues 233–253; that stretch reads LTIVAGIFIGIALLQIFGICL. Over 254–268 the chain is Cytoplasmic; the sequence is AQNLVSDIEAVRASW.

It belongs to the tetraspanin (TM4SF) family. As to quaternary structure, interacts with ADAM10; the interaction influences ADAM10 substrate specificity, endocytosis and turnover. In terms of processing, palmitoylated.

It is found in the cell membrane. Its function is as follows. Part of TspanC8 subgroup, composed of 6 members that interact with the transmembrane metalloprotease ADAM10. This interaction is required for ADAM10 exit from the endoplasmic reticulum and for enzymatic maturation and trafficking to the cell surface as well as substrate specificity. Different TspanC8/ADAM10 complexes have distinct substrates. Promotes ADAM10-mediated cleavage of CD44. Seems to regulate VE-cadherin expression in endothelial cells probably through interaction with ADAM10, promoting leukocyte transmigration. The polypeptide is Tetraspanin-5 (TSPAN5) (Bos taurus (Bovine)).